We begin with the raw amino-acid sequence, 235 residues long: Large ribosomal subunit protein uL1 (235 aa).

This sequence belongs to the universal ribosomal protein uL1 family. As to quaternary structure, part of the 50S ribosomal subunit.

Functionally, binds directly to 23S rRNA. The L1 stalk is quite mobile in the ribosome, and is involved in E site tRNA release. Its function is as follows. Protein L1 is also a translational repressor protein, it controls the translation of the L11 operon by binding to its mRNA. The chain is Large ribosomal subunit protein uL1 from Mycobacterium marinum (strain ATCC BAA-535 / M).